A 2241-amino-acid chain; its full sequence is MKVTQASCHQGDIARFGARAGNQCVCNGIMFLHALHLGGTSAVLQTEALDAIMEEGARLDARLERELQKKLPAGGRLPVYRLGDEVPRRLESRFGRTVHALSRPFNGTTETCDLDGYMCPGIFDFLRYAHAKPRPTYVLVTVNSLARAVVFTEDHMLVFDPHSSAECHNAAVYHCEGLHQVLMVLTGFGVQLSPAFYYEALFLYMLDVATVPEAEIAARLVSTYRDRDIDLTGVVRESADTAATTTTAAPSLPPLPDPIVDPGCPPGVAPSIPVYDPSSSPKKTPEKRRKDLSGSKHGGKKKPPSTTSKTLATASSSPSAIAAASSSSAVPPSYSCGEGALPALGRYQQLVDEVEQELKALTLPPLPANTSAWTLHAAGTESGANAATATAPSFDEAFLTDRLQQLIIHAVNQRSCLRRPCGPQSAAQQAVRAYLGLSKKLDAFLLNWLHHGLDLQRMHDYLSHKTTKGTYSTLDRALLEKMQVVFDPYGRQHGPALIAWVEEMLRYVESKPTNELSQRLQRFVTKRPMPVSDSFVCLRPVDFQRLTQVIEQRRRVLQRQREEYHGVYEHLAGLITSIDIHDLDASDLNRREILKALQPLDDNAKQELFRLGNAKMLELQMDLDRLSTQLLTRVHNHILNGFLPVEDLKQMERVVEQVLRLFYDLRDLKLCDGSYEEGFVVIREQLSYLMTGTVRDNVPLLQEILQLRHAYQQATQQNEGRLTQIHDLLHVIETLVRDPGSRGSALTLALVQEQLAQLEALGGLQLPEVQQRLQNAQLALSRLYEEEEETQRFLDGLSYDDPPNEQTIKRHPQLREMLRRDEQTRLRLINAVLSMFHTLVMRLARDESPRPTFFDAVSLLLQQLPPDSHEREDLRAANATYAQMVKKLEQIEKAGTGASEKRFQALRELVYFFRNHEYFFQHMVGRLGVGPQVTELYERYQHEMEEQHLERLEREWQEEAGKLTVTSVEDVQRVLARAPSHRVMHQMQQTLTTKMQDFLDKEKRKQEEQQRQLLDGYQKKVQQDLQRVVDAVKGEMLSTIPHQPLEATLELLLGLDQRAQPLLDKFNQDLLSALQQLSKKLDGRINECLHGVLTGDVERRCHPHREAAMQTQASLNHLDQILGPQLLIHETQQALQHAVHQAQFIEKCQQGDPTTAITGSEFEGDFARYRSSQQKMEEQLQETRQQMTETSERLDRSLRQDPGSSSVTRVPEKPFKGQELAGRITPPPADFQQPVFKTLLDQQADAARKALSDEADLLNQKVQTQLRQRDEQLSTAQNLWTDLVTRHKMSGGLDVTTPDAKALMEKPLETLRELLGKATQQLPYLSAERTVRWMLAFLEEALAQITADPTHPHHGSRTHYRNLQQQAVESAVTLAHQIEQNAACENFIAQHQEATANGASTPRVDMVQAVEAVWQRLEPGRVAGGAARHQKVQELLQRLGQTLGDLELQETLATEYFALLHGIQTFSYGLDFRSQLEKIRDLRTRFAELAKRRGTRLSNEGVLPNPRKPQATTSLGAFTRGLNALERHVQLGHQYLLNKLNGSSLVYRLEDIPSVLPATHETDPALIMRDRLRRLCFARHHDTFLEVVDVFGMRQIVTQAGEPIHLVTDYGNVAFKYLALRDDGRPLAWRRRCSGGGLKNVVTTRYKAITVAVAVCQTLRTFWPQISQYDLRPYLTQHQSHTHPAETHTLHNLKLFCYLVSTAWHQRIDTQQELTAADRVGSGEGGDVGEQRPGRGTVLRLSLQEFCVLIAALYPEYIYTVLKYPVQMSLPSLTAHLHQDVIHAVVNNTHKMPPDHLPEQVKAFCITPTQWPAMQLNKLFWENKLVQQLCQVGPQKSTPPLGKLWLYAMATLVFPQDMLQCLWLELKPQYAETYASVSELVQTLFQIFTQQCEMVTEGYTQPQLPTGEPVLQMIRVPRQDTTTTDTNTTTEPGLLDVFIQTETALDYALGSWLFGIPVCLGVHVADLLKGQRILVARHLEYTSRDRDFLRIQRSRDLNLSQLLQDTWTETPLEHCWLQAQIRRLRDYLRFPTRLEFIPLVIYNAQDHTVVRVLRPPSTFEQDHSRLVLDEAFPTFPLYDQDDNSSADNIAASGAAPTPPVPFNRVPVNIQFLRENPPPIARVQQPPRRHRHRAAAAADDDGQIDHVQDDTSRTADSALVSTAFGGSVFQENRLGETPLCRDELVAVAPGAASTSFASPPITVLTQNVLSALEILRLVRLDLRQLAQSVQDTIQHMRFLYLL.

Positions 1-238 (MKVTQASCHQ…IDLTGVVRES (238 aa)) are deubiquitination activity. The region spanning 4 to 226 (TQASCHQGDI…AARLVSTYRD (223 aa)) is the Peptidase C76 domain. Residues C24, D160, and H162 contribute to the active site. Residues 239–314 (ADTAATTTTA…STTSKTLATA (76 aa)) are disordered. Residues 240 to 250 (DTAATTTTAAP) show a composition bias toward low complexity. Residues 251-268 (SLPPLPDPIVDPGCPPGV) show a composition bias toward pro residues. Over residues 304–314 (PSTTSKTLATA) the composition is skewed to low complexity. The interaction with inner tegument protein stretch occupies residues 327–331 (SSAVP). The disordered stretch occupies residues 1170–1229 (RSSQQKMEEQLQETRQQMTETSERLDRSLRQDPGSSSVTRVPEKPFKGQELAGRITPPPA). The span at 1190 to 1199 (TSERLDRSLR) shows a compositional bias: basic and acidic residues.

It belongs to the herpesviridae large tegument protein family. Interacts with host CUL1 and CUL4A; these interactions inhibit the E3 ligase activity of cullins. Interacts with inner tegument protein. Interacts with capsid vertex specific component CVC2. Interacts with the major capsid protein/MCP.

The protein resides in the virion tegument. Its subcellular location is the host cytoplasm. It localises to the host nucleus. The enzyme catalyses Thiol-dependent hydrolysis of ester, thioester, amide, peptide and isopeptide bonds formed by the C-terminal Gly of ubiquitin (a 76-residue protein attached to proteins as an intracellular targeting signal).. Functionally, large tegument protein that plays multiple roles in the viral cycle. During viral entry, remains associated with the capsid while most of the tegument is detached and participates in the capsid transport toward the host nucleus. Plays a role in the routing of the capsid at the nuclear pore complex and subsequent uncoating. Within the host nucleus, acts as a deneddylase and promotes the degradation of nuclear CRLs (cullin-RING ubiquitin ligases) and thereby stabilizes nuclear CRL substrates, while cytoplasmic CRLs remain unaffected. These modifications prevent host cell cycle S-phase progression and create a favorable environment allowing efficient viral genome replication. Participates later in the secondary envelopment of capsids. Indeed, plays a linker role for the association of the outer viral tegument to the capsids together with the inner tegument protein. The polypeptide is Large tegument protein deneddylase (UL48) (Human cytomegalovirus (strain AD169) (HHV-5)).